We begin with the raw amino-acid sequence, 507 residues long: Cytochrome P450 52A7 (507 aa).

Residues 6–26 traverse the membrane as a helical segment; sequence LHYWYYVLPAFIIFHWIVSAI. Residue Cys456 coordinates heme.

The protein belongs to the cytochrome P450 family. It depends on heme as a cofactor.

The protein resides in the membrane. In terms of biological role, together with an NADPH cytochrome P450 the enzyme system catalyzes the terminal hydroxylation as the first step in the assimilation of alkanes and fatty acids. Preferentially hydroxylates lauric acid. In Candida tropicalis (Yeast), this protein is Cytochrome P450 52A7 (CYP52A7).